The following is a 266-amino-acid chain: Adaptin ear-binding coat-associated protein 2 (266 aa).

Disordered stretches follow at residues 165-198 (MRKK…KSST) and 245-266 (DFTK…WVQF). Ser-181 is modified (phosphoserine). Short sequence motifs (WXXF motif) lie at residues 243-246 (WGDF) and 263-266 (WVQF). Residues 249 to 266 (STGSPSSQSQPGTGWVQF) are compositionally biased toward low complexity.

It belongs to the NECAP family. Interacts with AP1G1 and AP2A1 components of the adapter protein complexes AP-1 and AP-2. Interacts with the GAE domain proteins GGA1, GGA2 and GGA3. Expressed in brain, heart, kidney, liver, lung, skeletal muscles and testis (at protein level).

The protein localises to the cytoplasmic vesicle. It is found in the clathrin-coated vesicle membrane. The protein resides in the cell membrane. Its function is as follows. Involved in endocytosis. The polypeptide is Adaptin ear-binding coat-associated protein 2 (Necap2) (Mus musculus (Mouse)).